A 308-amino-acid chain; its full sequence is MSVRGRVAPSQTPSRIPGTVLAYLALTKPRVIELLLVTAIPAMLLAQRGTVNPLLIVNTLIGGMLAAGGANALNCVADADIDKVMKRTARRPLARAAVPTRNALVFGLVLTAGSFLWLWWTTNLLSGLLALATIAFYVFIYTLLLKRRTSQNVVWGGAAGCMPVMIGWSAVTGTIQWPALVMFAIIFFWTPPHTWALAMRYKDDYKAAGVPMLPAVATERQVTKQIVVYTWLTVLATLALALATGWLYAAVALVAGVWFLAMAHQLYAGVRAGEPVKPLRLFLQSNNYLAVVFCALAIDSAIGLPHLF.

8 consecutive transmembrane segments (helical) span residues 31 to 51 (VIELLLVTAIPAMLLAQRGTV), 53 to 73 (PLLIVNTLIGGMLAAGGANAL), 102 to 122 (NALVFGLVLTAGSFLWLWWTT), 124 to 144 (LLSGLLALATIAFYVFIYTLL), 149 to 169 (TSQNVVWGGAAGCMPVMIGWS), 170 to 190 (AVTGTIQWPALVMFAIIFFWT), 240 to 260 (LALATGWLYAAVALVAGVWFL), and 288 to 308 (YLAVVFCALAIDSAIGLPHLF).

Belongs to the UbiA prenyltransferase family. Protoheme IX farnesyltransferase subfamily.

The protein resides in the cell membrane. The enzyme catalyses heme b + (2E,6E)-farnesyl diphosphate + H2O = Fe(II)-heme o + diphosphate. Its pathway is porphyrin-containing compound metabolism; heme O biosynthesis; heme O from protoheme: step 1/1. In terms of biological role, converts heme B (protoheme IX) to heme O by substitution of the vinyl group on carbon 2 of heme B porphyrin ring with a hydroxyethyl farnesyl side group. This is Protoheme IX farnesyltransferase from Mycolicibacterium paratuberculosis (strain ATCC BAA-968 / K-10) (Mycobacterium paratuberculosis).